Here is a 44-residue protein sequence, read N- to C-terminus: Cytochrome b559 subunit beta (44 aa).

Residues 19-35 (WLSVHALGVPSVFFLGA) form a helical membrane-spanning segment. His-23 lines the heme pocket.

The protein belongs to the PsbE/PsbF family. Heterodimer of an alpha subunit and a beta subunit. PSII is composed of 1 copy each of membrane proteins PsbA, PsbB, PsbC, PsbD, PsbE, PsbF, PsbH, PsbI, PsbJ, PsbK, PsbL, PsbM, PsbT, PsbX, PsbY, PsbZ, Psb30/Ycf12, peripheral proteins PsbO, CyanoQ (PsbQ), PsbU, PsbV and a large number of cofactors. It forms dimeric complexes. Requires heme b as cofactor.

The protein resides in the cellular thylakoid membrane. This b-type cytochrome is tightly associated with the reaction center of photosystem II (PSII). PSII is a light-driven water:plastoquinone oxidoreductase that uses light energy to abstract electrons from H(2)O, generating O(2) and a proton gradient subsequently used for ATP formation. It consists of a core antenna complex that captures photons, and an electron transfer chain that converts photonic excitation into a charge separation. The chain is Cytochrome b559 subunit beta from Synechococcus elongatus (strain ATCC 33912 / PCC 7942 / FACHB-805) (Anacystis nidulans R2).